Reading from the N-terminus, the 325-residue chain is MKPILLQGHERSITQIKYNREGDLLFTVAKDPIVNVWYSVNGERLGTYMGHTGAVWCVDADWDTKHVLTGSADNSCRLWDCETGKQLALLKTNSAVRTCGFDFGGNIIMFSTDKQMGYQCFVSFFDLRDPSQIDSNEPYMRIPCNDSKITSAVWGPLGECIIAGHEGGELNQYSAKSGEVLVNVKEHSRQINDIQLSRDMTMFVTASKDNTAKLFDSTTLEHQKTFRTERPVNSAALSPNYDHVVLGGGQEAMDVTTTSTRIGKFEARFFHLAFEEEFGRVKGHFGPINSVAFHPDGKSYSSGGEDGYVRIHYFDPQYFEFEFEA.

WD repeat units lie at residues 8–47 (GHERSITQIKYNREGDLLFTVAKDPIVNVWYSVNGERLGT), 50–91 (GHTG…ALLK), 144–183 (CNDSKITSAVWGPLGECIIAGHEGGELNQYSAKSGEVLVN), and 186–225 (EHSRQINDIQLSRDMTMFVTASKDNTAKLFDSTTLEHQKT). Phosphothreonine is present on Thr-219. An N6-acetyllysine modification is found at Lys-264. Lys-282 participates in a covalent cross-link: Glycyl lysine isopeptide (Lys-Gly) (interchain with G-Cter in ubiquitin). A WD 5 repeat occupies 283 to 324 (GHFGPINSVAFHPDGKSYSSGGEDGYVRIHYFDPQYFEFEFE). A Phosphotyrosine modification is found at Tyr-308.

Belongs to the eIF-3 subunit I family. As to quaternary structure, component of the eukaryotic translation initiation factor 3 (eIF-3) complex, which is composed of 13 subunits: EIF3A, EIF3B, EIF3C, EIF3D, EIF3E, EIF3F, EIF3G, EIF3H, EIF3I, EIF3J, EIF3K, EIF3L and EIF3M. The eIF-3 complex appears to include 3 stable modules: module A is composed of EIF3A, EIF3B, EIF3G and EIF3I; module B is composed of EIF3F, EIF3H, and EIF3M; and module C is composed of EIF3C, EIF3D, EIF3E, EIF3K and EIF3L. EIF3C of module C binds EIF3B of module A and EIF3H of module B, thereby linking the three modules. EIF3J is a labile subunit that binds to the eIF-3 complex via EIF3B. The eIF-3 complex interacts with RPS6KB1 under conditions of nutrient depletion. Mitogenic stimulation leads to binding and activation of a complex composed of MTOR and RPTOR, leading to phosphorylation and release of RPS6KB1 and binding of EIF4B to eIF-3. Phosphorylated by TGF-beta type II receptor.

It is found in the cytoplasm. In terms of biological role, component of the eukaryotic translation initiation factor 3 (eIF-3) complex, which is required for several steps in the initiation of protein synthesis. The eIF-3 complex associates with the 40S ribosome and facilitates the recruitment of eIF-1, eIF-1A, eIF-2:GTP:methionyl-tRNAi and eIF-5 to form the 43S pre-initiation complex (43S PIC). The eIF-3 complex stimulates mRNA recruitment to the 43S PIC and scanning of the mRNA for AUG recognition. The eIF-3 complex is also required for disassembly and recycling of post-termination ribosomal complexes and subsequently prevents premature joining of the 40S and 60S ribosomal subunits prior to initiation. The eIF-3 complex specifically targets and initiates translation of a subset of mRNAs involved in cell proliferation, including cell cycling, differentiation and apoptosis, and uses different modes of RNA stem-loop binding to exert either translational activation or repression. This Bos taurus (Bovine) protein is Eukaryotic translation initiation factor 3 subunit I.